The following is a 993-amino-acid chain: Isoleucine--tRNA ligase, mitochondrial (993 aa).

The transit peptide at 1–29 (SLWGTPRLPCSPGWQGATKRLLVRSVSGA) directs the protein to the mitochondrion. Lys55 carries the N6-acetyllysine; alternate modification. N6-succinyllysine; alternate is present on Lys55. A 'HIGH' region motif is present at residues 97-107 (PYANGDPHVGH). An N6-acetyllysine modification is found at Lys170. Lys175 is modified (N6-succinyllysine). Lys214 carries the N6-acetyllysine modification. Lys222 bears the N6-acetyllysine; alternate mark. The residue at position 222 (Lys222) is an N6-succinyllysine; alternate. Residues Lys460 and Lys481 each carry the N6-succinyllysine modification. 2 residues coordinate ATP: Lys645 and Lys648. The 'KMSKS' region motif lies at 645–649 (KMSKS). Lys706 carries the post-translational modification N6-acetyllysine. N6-acetyllysine; alternate is present on residues Lys756 and Lys762. An N6-succinyllysine; alternate mark is found at Lys756 and Lys762.

The protein belongs to the class-I aminoacyl-tRNA synthetase family.

It localises to the mitochondrion matrix. The enzyme catalyses tRNA(Ile) + L-isoleucine + ATP = L-isoleucyl-tRNA(Ile) + AMP + diphosphate. Its function is as follows. Aminoacyl-tRNA synthetase that catalyzes the specific attachment of isoleucine to its cognate tRNA (tRNA(Ile)). The polypeptide is Isoleucine--tRNA ligase, mitochondrial (IARS2) (Macaca fascicularis (Crab-eating macaque)).